The chain runs to 414 residues: MQSWPMPTIPSVPGKPAVLSLFDTSDQLIKPVEVDTPEVGVYVCGITPYDSTHLGHAATYLTFDLINRQLIDAGHRVHFVQNITDVDEPLFERALRDGVDWRELGSSQIDLFRSDMENLSVIPPRHYVGAMESIPEVIAMVETMLANGTAYIVESDSYRDIYASITATTQFGYESHYSRELMEQFFAERGGDPERVGKKDSLDALIWRAHRLGEPSWDAPFGAGRPGWHVECSAIATHHLGSHFAIQGGGSDLIFPHHEFSAAHAEATFGESRMAGHYVHTGMIGLDGTKMSKSLGNLVFVSRLTSEGYHPSDIRLGVFAGHYRDDRDWSTDLLTAAQERRQAWITAADNARDVQQVQQTIQKIRHLLANDLNTPAVLAEVDNWANLIPLNDSARTEAGRLMASGLDALLGVKI.

C44 provides a ligand contact to Zn(2+). L-cysteinyl-5'-AMP-binding positions include 44-47 (CGIT), T59, and 82-84 (NIT). Residues 46 to 56 (ITPYDSTHLGH) carry the 'HIGH' region motif. Residues 188 to 193 (ERGGDP) carry the 'ERGGDP' region motif. W228 serves as a coordination point for L-cysteinyl-5'-AMP. A Zn(2+)-binding site is contributed by C232. 250–252 (GSD) serves as a coordination point for L-cysteinyl-5'-AMP. Position 257 (H257) interacts with Zn(2+). Residue I284 participates in L-cysteinyl-5'-AMP binding. Residues 290 to 294 (KMSKS) carry the 'KMSKS' region motif.

Belongs to the class-I aminoacyl-tRNA synthetase family. MshC subfamily. In terms of assembly, monomer. Requires Zn(2+) as cofactor.

It catalyses the reaction 1D-myo-inositol 2-amino-2-deoxy-alpha-D-glucopyranoside + L-cysteine + ATP = 1D-myo-inositol 2-(L-cysteinylamino)-2-deoxy-alpha-D-glucopyranoside + AMP + diphosphate + H(+). In terms of biological role, catalyzes the ATP-dependent condensation of GlcN-Ins and L-cysteine to form L-Cys-GlcN-Ins. The protein is L-cysteine:1D-myo-inositol 2-amino-2-deoxy-alpha-D-glucopyranoside ligase (mshC) of Corynebacterium diphtheriae (strain ATCC 700971 / NCTC 13129 / Biotype gravis).